Here is a 142-residue protein sequence, read N- to C-terminus: Hemoglobin subunit alpha-2 (142 aa).

A Globin domain is found at 2 to 142 (VLSAADKSNI…VSTVLTSKYR (141 aa)). O2 is bound at residue His59. A heme b-binding site is contributed by His88.

This sequence belongs to the globin family. In terms of assembly, heterotetramer of two alpha chains and two beta chains. Red blood cells.

Functionally, involved in oxygen transport from the lung to the various peripheral tissues. This is Hemoglobin subunit alpha-2 from Bubalus bubalis (Domestic water buffalo).